The chain runs to 368 residues: MSETAKKVIVGMSGGVDSSVSAWLLQQQGYQVEGLFMKNWEEDDGEEYCTAAADLADAQAVCDKLGIELHTVNFAAEYWDNVFELFLAEYKAGRTPNPDILCNKEIKFKAFLEFAAEDLGADYIATGHYVRRADVDGKSRLLRGLDSNKDQSYFLYTLSHEQIAQSLFPVGELEKPQVRKIAEDLGLVTAKKKDSTGICFIGERKFREFLGRYLPAQPGKIITVDGDEIGEHQGLMYHTLGQRKGLGIGGTKEGTEEPWYVVDKDVENNILVVAQGHEHPRLMSVGLIAQQLHWVDREPFTGTMRCSVKTRYRQTDIPCTVKALDDDRIEVIFDEPVAAVTPGQSAVFYNGEVCLGGGIIEQRLPLPV.

ATP is bound by residues 11–18 and Met37; that span reads GMSGGVDS. Residues 97–99 form an interaction with target base in tRNA region; it reads NPD. Cys102 (nucleophile) is an active-site residue. Residues Cys102 and Cys199 are joined by a disulfide bond. Gly127 contributes to the ATP binding site. Residues 149 to 151 are interaction with tRNA; the sequence is KDQ. The active-site Cysteine persulfide intermediate is the Cys199. The segment at 311 to 312 is interaction with tRNA; that stretch reads RY.

The protein belongs to the MnmA/TRMU family. As to quaternary structure, interacts with TusE.

Its subcellular location is the cytoplasm. The catalysed reaction is S-sulfanyl-L-cysteinyl-[protein] + uridine(34) in tRNA + AH2 + ATP = 2-thiouridine(34) in tRNA + L-cysteinyl-[protein] + A + AMP + diphosphate + H(+). Functionally, catalyzes the 2-thiolation of uridine at the wobble position (U34) of tRNA(Lys), tRNA(Glu) and tRNA(Gln), leading to the formation of s(2)U34, the first step of tRNA-mnm(5)s(2)U34 synthesis. Sulfur is provided by IscS, via a sulfur-relay system. Binds ATP and its substrate tRNAs. The sequence is that of tRNA-specific 2-thiouridylase MnmA from Shigella boydii serotype 4 (strain Sb227).